The chain runs to 186 residues: MNTMFKSPKLSPQRLVTLAMLIALAFAIGKLSIPIIPQQLIISPTFIVNVMIGMIGGPIWAFISLAILDIVDNLSSGAGNFIIWWTLLEAVQGLFYGLFFYQKSLSWTNKKDWLHVTIATAIIMLIGSFIFTPLLVQIYYGVPFWAQFAAGRWLKIFEIPIRILVTMAIMPQLQRIPELRKLANFK.

The next 5 helical transmembrane spans lie at 16–36 (VTLAMLIALAFAIGKLSIPII), 47–67 (IVNVMIGMIGGPIWAFISLAI), 81–101 (FIIWWTLLEAVQGLFYGLFFY), 116–136 (VTIATAIIMLIGSFIFTPLLV), and 153–173 (WLKIFEIPIRILVTMAIMPQL).

In terms of assembly, forms a stable energy-coupling factor (ECF) transporter complex composed of a membrane-embedded substrate-binding protein (S component), two ATP-binding proteins (A components) and a transmembrane protein (T component).

It localises to the cell membrane. In terms of biological role, folate-binding protein that interacts with the energy-coupling factor (ECF) ABC-transporter complex. Unlike classic ABC transporters this ECF transporter provides the energy necessary to transport a number of different substrates. The substrates themselves are bound by transmembrane, not extracytoplasmic soluble proteins. The sequence is that of Folate transporter FolT (folT) from Streptococcus mutans serotype c (strain ATCC 700610 / UA159).